Consider the following 365-residue polypeptide: Mitochondrial protein C2orf69 homolog (365 aa).

The N-terminal 24 residues, M1–G24, are a transit peptide targeting the mitochondrion. Positions S28 to S64 are disordered. Polar residues predominate over residues R53–S64.

Belongs to the C2orf69 family.

The protein localises to the mitochondrion matrix. In terms of biological role, may play a role in the respiratory chain. The protein is Mitochondrial protein C2orf69 homolog of Mus musculus (Mouse).